A 132-amino-acid polypeptide reads, in one-letter code: MVEAFCATWKLADSHNFDEYMKALGVGFAMRQVGNVTKPTVIISSEGDKVVIRTQSTFKNTEISFKLGEEFDETTPDDRNCKSVVTLDGDKLVHVQKWDGKETNFVREIKDGRMVMTLTFGDVVAVRHYEKA.

Val-2 carries the post-translational modification N-acetylvaline. 127–129 (RHY) contributes to the a fatty acid binding site.

This sequence belongs to the calycin superfamily. Fatty-acid binding protein (FABP) family.

The protein resides in the cytoplasm. Its function is as follows. FABPs are thought to play a role in the intracellular transport of long-chain fatty acids and their acyl-CoA esters. The polypeptide is Fatty acid-binding protein, brain (FABP7) (Gallus gallus (Chicken)).